A 200-amino-acid polypeptide reads, in one-letter code: ATP synthase subunit b 1 (200 aa).

A helical membrane pass occupies residues 14 to 34 (AAVIVVVSLMAFCCAGFAVAA).

It belongs to the ATPase B chain family. F-type ATPases have 2 components, F(1) - the catalytic core - and F(0) - the membrane proton channel. F(1) has five subunits: alpha(3), beta(3), gamma(1), delta(1), epsilon(1). F(0) has three main subunits: a(1), b(2) and c(10-14). The alpha and beta chains form an alternating ring which encloses part of the gamma chain. F(1) is attached to F(0) by a central stalk formed by the gamma and epsilon chains, while a peripheral stalk is formed by the delta and b chains.

It is found in the cell inner membrane. In terms of biological role, f(1)F(0) ATP synthase produces ATP from ADP in the presence of a proton or sodium gradient. F-type ATPases consist of two structural domains, F(1) containing the extramembraneous catalytic core and F(0) containing the membrane proton channel, linked together by a central stalk and a peripheral stalk. During catalysis, ATP synthesis in the catalytic domain of F(1) is coupled via a rotary mechanism of the central stalk subunits to proton translocation. Functionally, component of the F(0) channel, it forms part of the peripheral stalk, linking F(1) to F(0). In Desulfosudis oleivorans (strain DSM 6200 / JCM 39069 / Hxd3) (Desulfococcus oleovorans), this protein is ATP synthase subunit b 1.